A 657-amino-acid polypeptide reads, in one-letter code: Probable alpha-galactosidase D (657 aa).

The N-terminal stretch at 1–16 (MLPKIFYLSLLPAALG) is a signal peptide. N-linked (GlcNAc...) asparagine glycans are attached at residues Asn47 and Asn91. A disulfide bond links Cys124 and Cys157. Asp155 acts as the Nucleophile in catalysis. 2 N-linked (GlcNAc...) asparagine glycosylation sites follow: Asn182 and Asn191. 200-204 (EWGID) serves as a coordination point for substrate. The Proton donor role is filled by Asp222. N-linked (GlcNAc...) asparagine glycosylation is found at Asn291, Asn438, Asn460, Asn505, Asn539, Asn543, and Asn582.

This sequence belongs to the glycosyl hydrolase 27 family.

It localises to the secreted. The enzyme catalyses Hydrolysis of terminal, non-reducing alpha-D-galactose residues in alpha-D-galactosides, including galactose oligosaccharides, galactomannans and galactolipids.. Its function is as follows. Hydrolyzes a variety of simple alpha-D-galactoside as well as more complex molecules such as oligosaccharides and polysaccharides. The protein is Probable alpha-galactosidase D (aglD) of Aspergillus oryzae (strain ATCC 42149 / RIB 40) (Yellow koji mold).